Consider the following 274-residue polypeptide: tRNA pseudouridine synthase A (274 aa).

Asp51 (nucleophile) is an active-site residue. Tyr109 contacts substrate.

This sequence belongs to the tRNA pseudouridine synthase TruA family. In terms of assembly, homodimer.

It carries out the reaction uridine(38/39/40) in tRNA = pseudouridine(38/39/40) in tRNA. In terms of biological role, formation of pseudouridine at positions 38, 39 and 40 in the anticodon stem and loop of transfer RNAs. This is tRNA pseudouridine synthase A from Acidovorax ebreus (strain TPSY) (Diaphorobacter sp. (strain TPSY)).